The primary structure comprises 276 residues: MAVVTMKQLLDSGTHFGHQTRRWNPKMKRFIFTDRNGIYIIDLQQTLTFIDKAYEFVKETVAHGGTVLFVGTKKQAQESVAAEATRVGMPYVNQRWLGGMLTNFSTVHKRLQRLKELEAMEQTGGFEGRSKKEILGLTREKNKLERSLGGIRDMAKVPSAIWVVDTNKEHIAVGEARKLGIPVIAILDTNCDPDEVDYPIPGNDDAIRSAALLTKVIASAVAEGLQARAGAGRGDGKPVVEAAEPLAEWEQELLAGATAAAPAEGAVATETTPTEG.

A disordered region spans residues 254 to 276 (LAGATAAAPAEGAVATETTPTEG). Low complexity predominate over residues 255–276 (AGATAAAPAEGAVATETTPTEG).

The protein belongs to the universal ribosomal protein uS2 family.

The polypeptide is Small ribosomal subunit protein uS2 (Mycobacterium ulcerans (strain Agy99)).